Consider the following 382-residue polypeptide: ATP phosphoribosyltransferase regulatory subunit (382 aa).

It belongs to the class-II aminoacyl-tRNA synthetase family. HisZ subfamily. As to quaternary structure, heteromultimer composed of HisG and HisZ subunits.

Its subcellular location is the cytoplasm. It functions in the pathway amino-acid biosynthesis; L-histidine biosynthesis; L-histidine from 5-phospho-alpha-D-ribose 1-diphosphate: step 1/9. Required for the first step of histidine biosynthesis. May allow the feedback regulation of ATP phosphoribosyltransferase activity by histidine. In Burkholderia pseudomallei (strain 668), this protein is ATP phosphoribosyltransferase regulatory subunit.